We begin with the raw amino-acid sequence, 434 residues long: Probable phosphoglucosamine mutase (434 aa).

Serine 91 (phosphoserine intermediate) is an active-site residue. 4 residues coordinate Mg(2+): serine 91, aspartate 229, aspartate 231, and aspartate 233. A Phosphoserine modification is found at serine 91.

Belongs to the phosphohexose mutase family. Requires Mg(2+) as cofactor. Post-translationally, activated by phosphorylation.

The enzyme catalyses alpha-D-glucosamine 1-phosphate = D-glucosamine 6-phosphate. Functionally, catalyzes the conversion of glucosamine-6-phosphate to glucosamine-1-phosphate. In Methanosarcina acetivorans (strain ATCC 35395 / DSM 2834 / JCM 12185 / C2A), this protein is Probable phosphoglucosamine mutase.